Consider the following 118-residue polypeptide: Large ribosomal subunit protein uL18 (118 aa).

It belongs to the universal ribosomal protein uL18 family. Part of the 50S ribosomal subunit; part of the 5S rRNA/L5/L18/L25 subcomplex. Contacts the 5S and 23S rRNAs.

Its function is as follows. This is one of the proteins that bind and probably mediate the attachment of the 5S RNA into the large ribosomal subunit, where it forms part of the central protuberance. The sequence is that of Large ribosomal subunit protein uL18 from Dichelobacter nodosus (strain VCS1703A).